Here is a 346-residue protein sequence, read N- to C-terminus: Probable choline kinase 3 (346 aa).

ATP-binding residues include Arg-71, Gln-207, and Asp-224.

Belongs to the choline/ethanolamine kinase family.

The enzyme catalyses choline + ATP = phosphocholine + ADP + H(+). It participates in phospholipid metabolism; phosphatidylcholine biosynthesis; phosphocholine from choline: step 1/1. In terms of biological role, involved in phospholipid biosynthesis. Catalyzes the first step in phosphatidylcholine biosynthesis. The sequence is that of Probable choline kinase 3 from Arabidopsis thaliana (Mouse-ear cress).